We begin with the raw amino-acid sequence, 204 residues long: Thymidylate kinase (204 aa).

13 to 20 (GIDGSGKS) contacts ATP.

It belongs to the thymidylate kinase family.

The enzyme catalyses dTMP + ATP = dTDP + ADP. Functionally, phosphorylation of dTMP to form dTDP in both de novo and salvage pathways of dTTP synthesis. The sequence is that of Thymidylate kinase from Leptospira interrogans serogroup Icterohaemorrhagiae serovar copenhageni (strain Fiocruz L1-130).